Consider the following 487-residue polypeptide: UPF0276 protein SAV_2218 (487 aa).

Residues 1–285 are UPF0276; sequence MVEEGTMERL…LGAIRKTLEK (285 aa). The interval 286–487 is unknown; it reads AGTRAGASAG…RATRRVLLRR (202 aa). The interval 319 to 348 is disordered; the sequence is AGPRRGGADAQAAPRAAGTEALSAASTSTP. Over residues 326 to 348 the composition is skewed to low complexity; sequence ADAQAAPRAAGTEALSAASTSTP.

In the N-terminal section; belongs to the UPF0276 family.

The polypeptide is UPF0276 protein SAV_2218 (Streptomyces avermitilis (strain ATCC 31267 / DSM 46492 / JCM 5070 / NBRC 14893 / NCIMB 12804 / NRRL 8165 / MA-4680)).